The primary structure comprises 71 residues: Translation initiation factor IF-1 (71 aa).

The region spanning 1–71 is the S1-like domain; the sequence is MANDVIEIEG…TKGRITYRFR (71 aa).

It belongs to the IF-1 family. Component of the 30S ribosomal translation pre-initiation complex which assembles on the 30S ribosome in the order IF-2 and IF-3, IF-1 and N-formylmethionyl-tRNA(fMet); mRNA recruitment can occur at any time during PIC assembly.

It is found in the cytoplasm. One of the essential components for the initiation of protein synthesis. Stabilizes the binding of IF-2 and IF-3 on the 30S subunit to which N-formylmethionyl-tRNA(fMet) subsequently binds. Helps modulate mRNA selection, yielding the 30S pre-initiation complex (PIC). Upon addition of the 50S ribosomal subunit IF-1, IF-2 and IF-3 are released leaving the mature 70S translation initiation complex. The polypeptide is Translation initiation factor IF-1 (Leuconostoc mesenteroides subsp. mesenteroides (strain ATCC 8293 / DSM 20343 / BCRC 11652 / CCM 1803 / JCM 6124 / NCDO 523 / NBRC 100496 / NCIMB 8023 / NCTC 12954 / NRRL B-1118 / 37Y)).